Reading from the N-terminus, the 290-residue chain is Acetylglutamate kinase (290 aa).

Substrate-binding positions include 65-66, Arg-87, and Asn-186; that span reads GG.

This sequence belongs to the acetylglutamate kinase family. ArgB subfamily.

It localises to the cytoplasm. It catalyses the reaction N-acetyl-L-glutamate + ATP = N-acetyl-L-glutamyl 5-phosphate + ADP. The protein operates within amino-acid biosynthesis; L-arginine biosynthesis; N(2)-acetyl-L-ornithine from L-glutamate: step 2/4. In terms of biological role, catalyzes the ATP-dependent phosphorylation of N-acetyl-L-glutamate. The chain is Acetylglutamate kinase from Mycobacterium sp. (strain JLS).